The chain runs to 79 residues: Putative defensin-like protein 203 (79 aa).

Positions 1–27 (MAKLIVNFSALLMIILLVSNGLPKAVA) are cleaved as a signal peptide. 4 disulfides stabilise this stretch: C30–C79, C40–C64, C49–C73, and C53–C75.

It belongs to the DEFL family.

It is found in the secreted. This Arabidopsis thaliana (Mouse-ear cress) protein is Putative defensin-like protein 203.